The sequence spans 441 residues: Squalene synthase (441 aa).

2 helical membrane passes run Ser-293 to Gly-313 and Phe-420 to Ala-440.

It belongs to the phytoene/squalene synthase family. Requires Mg(2+) as cofactor.

The protein resides in the endoplasmic reticulum membrane. The catalysed reaction is 2 (2E,6E)-farnesyl diphosphate + NADPH + H(+) = squalene + 2 diphosphate + NADP(+). It carries out the reaction 2 (2E,6E)-farnesyl diphosphate + NADH + H(+) = squalene + 2 diphosphate + NAD(+). The protein operates within terpene metabolism; lanosterol biosynthesis; lanosterol from farnesyl diphosphate: step 1/3. In terms of biological role, catalyzes the condensation of 2 two farnesyl pyrophosphate moieties to form squalene. It is the first committed enzyme of the sterol biosynthesis pathway. Required for the biosynthesis of ergosterol. The protein is Squalene synthase (ERG9) of Eremothecium gossypii (strain ATCC 10895 / CBS 109.51 / FGSC 9923 / NRRL Y-1056) (Yeast).